We begin with the raw amino-acid sequence, 308 residues long: Putative mitochondrial transporter UCP3 (308 aa).

Over 1–10 the chain is Mitochondrial intermembrane; it reads MVGLQPSEVP. The chain crosses the membrane as a helical span at residues 11-32; that stretch reads PTTVVKFLGAGTAACFADLLTF. Solcar repeat units follow at residues 11-102, 111-202, and 211-296; these read PTTV…VKQF, SSVA…IKEK, and DNFP…LKRA. The Mitochondrial matrix portion of the chain corresponds to 33-73; it reads PLDTAKVRLQIQGENPGVQSVQYRGVLGTILTMVRTEGPRS. The helical transmembrane segment at 74-96 threads the bilayer; that stretch reads PYSGLVAGLHRQMSFASIRIGLY. The Mitochondrial intermembrane segment spans residues 97 to 116; the sequence is DSVKQFYTPKGTDHSSVAIR. A helical transmembrane segment spans residues 117 to 133; sequence ILAGCTTGAMAVTCAQP. At 134 to 179 the chain is on the mitochondrial matrix side; sequence TDVVKVRFQAMIRLGTGGERKYRGTMDAYRTIAREEGVRGLWKGTW. Residues 180-196 traverse the membrane as a helical segment; that stretch reads PNITRNAIVNCAEMVTY. At 197 to 213 the chain is on the mitochondrial intermembrane side; it reads DIIKEKLLDSHLFTDNF. The chain crosses the membrane as a helical span at residues 214 to 233; that stretch reads PCHFVSAFGAGFCATVVASP. Residues 234-267 lie on the Mitochondrial matrix side of the membrane; that stretch reads VDVVKTRYMNAPPGRYRSPLHCMLRMVAQEGPTA. Residues 268 to 290 form a helical membrane-spanning segment; it reads FYKGFMPSFLRLGSWNVMMFVTY. The interval 275–297 is purine nucleotide binding; the sequence is SFLRLGSWNVMMFVTYEQLKRAL. Topologically, residues 291–308 are mitochondrial intermembrane; it reads EQLKRALMKVQVLRESPF.

Belongs to the mitochondrial carrier (TC 2.A.29) family. As to quaternary structure, interacts with HAX1; the interaction is direct and calcium-dependent.

It is found in the mitochondrion inner membrane. Functionally, putative transmembrane transporter that plays a role in mitochondrial metabolism via an as yet unclear mechanism. Originally, this mitochondrial protein was thought to act as a proton transmembrane transporter from the mitochondrial intermembrane space into the matrix, causing proton leaks through the inner mitochondrial membrane, thereby uncoupling mitochondrial membrane potential generation from ATP synthesis. However, this function is controversial and uncoupling may not be the function, or at least not the main function, but rather a consequence of more conventional metabolite transporter activity. This Rattus norvegicus (Rat) protein is Putative mitochondrial transporter UCP3.